We begin with the raw amino-acid sequence, 355 residues long: UDP-3-O-acylglucosamine N-acyltransferase (355 aa).

H252 serves as the catalytic Proton acceptor.

Belongs to the transferase hexapeptide repeat family. LpxD subfamily. Homotrimer.

It catalyses the reaction a UDP-3-O-[(3R)-3-hydroxyacyl]-alpha-D-glucosamine + a (3R)-hydroxyacyl-[ACP] = a UDP-2-N,3-O-bis[(3R)-3-hydroxyacyl]-alpha-D-glucosamine + holo-[ACP] + H(+). Its pathway is bacterial outer membrane biogenesis; LPS lipid A biosynthesis. Functionally, catalyzes the N-acylation of UDP-3-O-acylglucosamine using 3-hydroxyacyl-ACP as the acyl donor. Is involved in the biosynthesis of lipid A, a phosphorylated glycolipid that anchors the lipopolysaccharide to the outer membrane of the cell. The sequence is that of UDP-3-O-acylglucosamine N-acyltransferase from Polynucleobacter necessarius subsp. necessarius (strain STIR1).